A 212-amino-acid polypeptide reads, in one-letter code: Thymidylate kinase (212 aa).

11–18 (GGEGVGKS) contacts ATP.

Belongs to the thymidylate kinase family.

The catalysed reaction is dTMP + ATP = dTDP + ADP. Phosphorylation of dTMP to form dTDP in both de novo and salvage pathways of dTTP synthesis. The sequence is that of Thymidylate kinase from Chromohalobacter salexigens (strain ATCC BAA-138 / DSM 3043 / CIP 106854 / NCIMB 13768 / 1H11).